Here is a 289-residue protein sequence, read N- to C-terminus: ATP synthase gamma chain (289 aa).

Belongs to the ATPase gamma chain family. F-type ATPases have 2 components, CF(1) - the catalytic core - and CF(0) - the membrane proton channel. CF(1) has five subunits: alpha(3), beta(3), gamma(1), delta(1), epsilon(1). CF(0) has three main subunits: a, b and c.

The protein resides in the cell inner membrane. Produces ATP from ADP in the presence of a proton gradient across the membrane. The gamma chain is believed to be important in regulating ATPase activity and the flow of protons through the CF(0) complex. The protein is ATP synthase gamma chain of Acinetobacter baumannii (strain AB307-0294).